Consider the following 192-residue polypeptide: uncharacterized protein (192 aa).

The region spanning 29–160 is the Nudix hydrolase domain; it reads HRQAAVLIPI…PLDIYRRGDS (132 aa). The short motif at 67–89 is the Nudix box element; it reads GAVDDTDASVIAAALREAEEEVA. Mg(2+) contacts are provided by Glu83 and Glu87.

Belongs to the Nudix hydrolase family. PCD1 subfamily. Mn(2+) serves as cofactor. Requires Mg(2+) as cofactor.

Its function is as follows. Probably mediates the hydrolysis of some nucleoside diphosphate derivatives. This is an uncharacterized protein from Shigella flexneri serotype 5b (strain 8401).